The following is a 33-amino-acid chain: GLWSTIKQKGKEAAIAAAKAAGKAVLNAASEAL.

A Leucine amide modification is found at Leu-33.

Expressed by the skin glands.

Its subcellular location is the secreted. Functionally, has antimicrobial activity. The protein is Dermaseptin-H6 of Pithecopus hypochondrialis (Orange-legged leaf frog).